The sequence spans 178 residues: Large ribosomal subunit protein uL10 (178 aa).

This sequence belongs to the universal ribosomal protein uL10 family. As to quaternary structure, part of the ribosomal stalk of the 50S ribosomal subunit. The N-terminus interacts with L11 and the large rRNA to form the base of the stalk. The C-terminus forms an elongated spine to which L12 dimers bind in a sequential fashion forming a multimeric L10(L12)X complex.

Forms part of the ribosomal stalk, playing a central role in the interaction of the ribosome with GTP-bound translation factors. The polypeptide is Large ribosomal subunit protein uL10 (Salinibacter ruber (strain DSM 13855 / M31)).